The chain runs to 153 residues: Endoribonuclease YbeY (153 aa).

Zn(2+) contacts are provided by His114, His118, and His124.

It belongs to the endoribonuclease YbeY family. It depends on Zn(2+) as a cofactor.

It is found in the cytoplasm. Its function is as follows. Single strand-specific metallo-endoribonuclease involved in late-stage 70S ribosome quality control and in maturation of the 3' terminus of the 16S rRNA. The chain is Endoribonuclease YbeY from Shewanella baltica (strain OS195).